Reading from the N-terminus, the 344-residue chain is Phosphoribosylformylglycinamidine cyclo-ligase (344 aa).

Belongs to the AIR synthase family.

It is found in the cytoplasm. It carries out the reaction 2-formamido-N(1)-(5-O-phospho-beta-D-ribosyl)acetamidine + ATP = 5-amino-1-(5-phospho-beta-D-ribosyl)imidazole + ADP + phosphate + H(+). The protein operates within purine metabolism; IMP biosynthesis via de novo pathway; 5-amino-1-(5-phospho-D-ribosyl)imidazole from N(2)-formyl-N(1)-(5-phospho-D-ribosyl)glycinamide: step 2/2. The protein is Phosphoribosylformylglycinamidine cyclo-ligase of Synechococcus sp. (strain RCC307).